The primary structure comprises 260 residues: 3'-5' ssDNA/RNA exonuclease TatD (260 aa).

A divalent metal cation is bound by residues E91, H127, and H152.

The protein belongs to the metallo-dependent hydrolases superfamily. TatD-type hydrolase family. TatD subfamily. In terms of assembly, monomer. The cofactor is Mg(2+).

It is found in the cytoplasm. Functionally, 3'-5' exonuclease that prefers single-stranded DNA and RNA. May play a role in the H(2)O(2)-induced DNA damage repair. This Salmonella typhimurium (strain LT2 / SGSC1412 / ATCC 700720) protein is 3'-5' ssDNA/RNA exonuclease TatD.